The sequence spans 481 residues: Cysteine--tRNA ligase (481 aa).

Cys29 serves as a coordination point for Zn(2+). The 'HIGH' region signature appears at Pro31–His41. Residues Cys210, His235, and Glu239 each coordinate Zn(2+). The 'KMSKS' region signature appears at Lys272–Ser276. An ATP-binding site is contributed by Lys275.

This sequence belongs to the class-I aminoacyl-tRNA synthetase family. As to quaternary structure, monomer. Requires Zn(2+) as cofactor.

It is found in the cytoplasm. The catalysed reaction is tRNA(Cys) + L-cysteine + ATP = L-cysteinyl-tRNA(Cys) + AMP + diphosphate. The sequence is that of Cysteine--tRNA ligase from Anaeromyxobacter dehalogenans (strain 2CP-1 / ATCC BAA-258).